Here is a 379-residue protein sequence, read N- to C-terminus: Ribosomal RNA large subunit methyltransferase G (379 aa).

Belongs to the methyltransferase superfamily. RlmG family.

It localises to the cytoplasm. The catalysed reaction is guanosine(1835) in 23S rRNA + S-adenosyl-L-methionine = N(2)-methylguanosine(1835) in 23S rRNA + S-adenosyl-L-homocysteine + H(+). In terms of biological role, specifically methylates the guanine in position 1835 (m2G1835) of 23S rRNA. This is Ribosomal RNA large subunit methyltransferase G from Pectobacterium atrosepticum (strain SCRI 1043 / ATCC BAA-672) (Erwinia carotovora subsp. atroseptica).